The primary structure comprises 133 residues: MPAPSSPRKNQTSFDPEMLLKLVTDSLDDDQALEIATIPLAGKSSIADYMVIASGRSSRQVTAMAQKLADRIKAATGYVSKIEGLPAADWVLLDAGDIIIHLFRPEVRSFYNLERMWGFGDESDQPVSQSVLS.

The protein belongs to the Iojap/RsfS family. As to quaternary structure, interacts with ribosomal protein uL14 (rplN).

It is found in the cytoplasm. Functions as a ribosomal silencing factor. Interacts with ribosomal protein uL14 (rplN), blocking formation of intersubunit bridge B8. Prevents association of the 30S and 50S ribosomal subunits and the formation of functional ribosomes, thus repressing translation. The protein is Ribosomal silencing factor RsfS of Zymomonas mobilis subsp. mobilis (strain ATCC 31821 / ZM4 / CP4).